The following is a 46-amino-acid chain: Photosystem II reaction center protein K (46 aa).

The propeptide occupies 1-9 (MIDALVLVA). Topologically, residues 10-19 (KLPEAYAIFD) are lumenal. Residues 20 to 39 (PLVDVLPVIPVLFLALAFVW) form a helical membrane-spanning segment. The Cytoplasmic portion of the chain corresponds to 40-46 (QAAVGFR).

This sequence belongs to the PsbK family. As to quaternary structure, PSII is composed of 1 copy each of membrane proteins PsbA, PsbB, PsbC, PsbD, PsbE, PsbF, PsbH, PsbI, PsbJ, PsbK, PsbL, PsbM, PsbT, PsbX, PsbY, PsbZ, Psb30/Ycf12, peripheral proteins PsbO, CyanoQ(PsbQ), PsbU, PsbV and a large number of cofactors. It forms dimeric complexes. Part of a photosystem II (PSII) assembly intermediate complex PSII-I; crystallized from a strain deleted of psbJ, it forms monomeric PSII before addition of the oxygen evolving complex. PSII-I includes 3 assembly factors not found in mature PSII (Psb27, Psb28 and Psb34). PSII binds multiple chlorophylls, carotenoids and specific lipids. serves as cofactor.

It localises to the cellular thylakoid membrane. Its function is as follows. One of the components of the core complex of photosystem II (PSII). PSII is a light-driven water:plastoquinone oxidoreductase that uses light energy to abstract electrons from H(2)O, generating O(2) and a proton gradient subsequently used for ATP formation. It consists of a core antenna complex that captures photons, and an electron transfer chain that converts photonic excitation into a charge separation. Required for association of PsbZ and Psb30/Ycf12 with PSII. The polypeptide is Photosystem II reaction center protein K (Thermosynechococcus vestitus (strain NIES-2133 / IAM M-273 / BP-1)).